The chain runs to 400 residues: S-adenosylmethionine synthase (400 aa).

An ATP-binding site is contributed by His-15. Asp-17 serves as a coordination point for Mg(2+). Glu-43 contacts K(+). Glu-56 and Gln-99 together coordinate L-methionine. Residues 99–109 (QSLEIGAGVDT) are flexible loop. Residues 174–176 (DGK), Asp-254, 260–261 (RK), Ala-277, and Lys-281 contribute to the ATP site. Asp-254 contributes to the L-methionine binding site. L-methionine is bound at residue Lys-285.

This sequence belongs to the AdoMet synthase family. As to quaternary structure, homotetramer; dimer of dimers. The cofactor is Mg(2+). Requires K(+) as cofactor.

It is found in the cytoplasm. It catalyses the reaction L-methionine + ATP + H2O = S-adenosyl-L-methionine + phosphate + diphosphate. It functions in the pathway amino-acid biosynthesis; S-adenosyl-L-methionine biosynthesis; S-adenosyl-L-methionine from L-methionine: step 1/1. Functionally, catalyzes the formation of S-adenosylmethionine (AdoMet) from methionine and ATP. The overall synthetic reaction is composed of two sequential steps, AdoMet formation and the subsequent tripolyphosphate hydrolysis which occurs prior to release of AdoMet from the enzyme. The chain is S-adenosylmethionine synthase from Corynebacterium kroppenstedtii (strain DSM 44385 / JCM 11950 / CIP 105744 / CCUG 35717).